Reading from the N-terminus, the 473-residue chain is TOX high mobility group box family member 2 (473 aa).

4 disordered regions span residues 1–42 (MSDG…SLLH), 139–211 (GLRS…VSAY), 277–302 (SKSP…PPKQ), and 340–473 (LLPG…PSAR). Residues 8–20 (LLSTSQTYNSQGE) show a composition bias toward polar residues. The tract at residues 25-63 (YEIPPITPPNLPEPSLLHLGDHEAGYHSLCHGLAPNGLL) is required for transcriptional activation. Residues 153-164 (GSKSATPSPSSS) are compositionally biased toward low complexity. Residues 171–188 (DAHFKISGEKRPSTDPGK) show a composition bias toward basic and acidic residues. The Nuclear localization signal signature appears at 172 to 201 (AHFKISGEKRPSTDPGKKAKNPKKKKKKDP). The segment covering 189–199 (KAKNPKKKKKK) has biased composition (basic residues). A DNA-binding region (HMG box) is located at residues 204–272 (PQKPVSAYAL…EYLKALAAYR (69 aa)). 2 stretches are compositionally biased toward low complexity: residues 373 to 382 (LLSPPLSMSP) and 415 to 440 (SDFP…WDGS). The span at 463-473 (SPKNLQEPSAR) shows a compositional bias: polar residues.

In terms of tissue distribution, highly expressed in ovary, where it is restricted to undifferentiated granulosa cells. Expressed in hypothalamus, pituitary gland, testis and uterus.

The protein resides in the nucleus. Functionally, putative transcriptional activator involved in the hypothalamo-pituitary-gonadal system. The sequence is that of TOX high mobility group box family member 2 (Tox2) from Rattus norvegicus (Rat).